We begin with the raw amino-acid sequence, 252 residues long: Phosphoribosylaminoimidazole-succinocarboxamide synthase 1 (252 aa).

It belongs to the SAICAR synthetase family.

It catalyses the reaction 5-amino-1-(5-phospho-D-ribosyl)imidazole-4-carboxylate + L-aspartate + ATP = (2S)-2-[5-amino-1-(5-phospho-beta-D-ribosyl)imidazole-4-carboxamido]succinate + ADP + phosphate + 2 H(+). Its pathway is purine metabolism; IMP biosynthesis via de novo pathway; 5-amino-1-(5-phospho-D-ribosyl)imidazole-4-carboxamide from 5-amino-1-(5-phospho-D-ribosyl)imidazole-4-carboxylate: step 1/2. This Caulobacter vibrioides (strain ATCC 19089 / CIP 103742 / CB 15) (Caulobacter crescentus) protein is Phosphoribosylaminoimidazole-succinocarboxamide synthase 1 (purC1).